The primary structure comprises 78 residues: Acyl carrier protein (78 aa).

The 76-residue stretch at 1-76 (MALFEDIQAV…DVVKYIEDNK (76 aa)) folds into the Carrier domain. The residue at position 36 (S36) is an O-(pantetheine 4'-phosphoryl)serine.

This sequence belongs to the acyl carrier protein (ACP) family. Post-translationally, 4'-phosphopantetheine is transferred from CoA to a specific serine of apo-ACP by AcpS. This modification is essential for activity because fatty acids are bound in thioester linkage to the sulfhydryl of the prosthetic group.

The protein localises to the cytoplasm. It functions in the pathway lipid metabolism; fatty acid biosynthesis. Functionally, carrier of the growing fatty acid chain in fatty acid biosynthesis. This chain is Acyl carrier protein, found in Helicobacter pylori (strain J99 / ATCC 700824) (Campylobacter pylori J99).